The sequence spans 459 residues: FBD-associated F-box protein At1g61320 (459 aa).

The segment at Met-1–Thr-25 is disordered. The region spanning Lys-21–Ile-69 is the F-box domain. The FBD domain occupies Val-396–Met-428.

This is FBD-associated F-box protein At1g61320 from Arabidopsis thaliana (Mouse-ear cress).